The chain runs to 751 residues: Dual specificity tyrosine-phosphorylation-regulated kinase 1A (751 aa).

Polar residues predominate over residues 59–68 (YNDQIQQPLP). 2 disordered regions span residues 59 to 81 (YNDQIQQPLPNQRRMPQTFRDPA) and 104 to 129 (YAKKKRRHQQGQGDDSSHKKERKVYN). Positions 109-126 (RRHQQGQGDDSSHKKERK) match the Bipartite nuclear localization signal motif. The region spanning 151 to 471 (YEIDSLIGKG…PYYALQHSFF (321 aa)) is the Protein kinase domain. ATP is bound by residues 157-165 (IGKGSFGQV), Lys-180, and 230-233 (FEML). The Proton acceptor role is filled by Asp-279. Positions 477–493 (EGTNTSNSVSTSPAMEQ) are enriched in polar residues. Disordered stretches follow at residues 477-532 (EGTN…HSGG), 580-667 (HVPS…GNQA), and 730-751 (GMDREDSPMTGVCVQQSPVASS). The span at 494–517 (SQSSGTTSSTSSSSGGSSGTSNSG) shows a compositional bias: low complexity. The segment at 585–613 (QQNVPHHHGNGSHHHHHHHHHHHGQHVLS) is histidine-rich domain (HRD). The segment covering 589–609 (PHHHGNGSHHHHHHHHHHHGQ) has biased composition (basic residues). The segment covering 611-622 (VLSNRTRTRIYN) has biased composition (polar residues). Composition is skewed to low complexity over residues 623 to 633 (SPSTSSSTQDS) and 642 to 660 (SMTSLSSSTTSSSTSSSST). Over residues 742–751 (CVQQSPVASS) the composition is skewed to polar residues.

The protein belongs to the protein kinase superfamily. CMGC Ser/Thr protein kinase family. MNB/DYRK subfamily. Autophosphorylated on tyrosine residues.

It is found in the nucleus. Its subcellular location is the nucleus speckle. The enzyme catalyses L-seryl-[protein] + ATP = O-phospho-L-seryl-[protein] + ADP + H(+). It carries out the reaction L-threonyl-[protein] + ATP = O-phospho-L-threonyl-[protein] + ADP + H(+). The catalysed reaction is L-tyrosyl-[protein] + ATP = O-phospho-L-tyrosyl-[protein] + ADP + H(+). It catalyses the reaction [DNA-directed RNA polymerase] + ATP = phospho-[DNA-directed RNA polymerase] + ADP + H(+). Its function is as follows. Dual-specificity kinase which possesses both serine/threonine and tyrosine kinase activities. Exhibits a substrate preference for proline at position P+1 and arginine at position P-3. Plays an important role in double-strand breaks (DSBs) repair following DNA damage. Mechanistically, phosphorylates RNF169 and increases its ability to block accumulation of TP53BP1 at the DSB sites thereby promoting homologous recombination repair (HRR). Also acts as a positive regulator of transcription by acting as a CTD kinase that mediates phosphorylation of the CTD (C-terminal domain) of the large subunit of RNA polymerase II (RNAP II) POLR2A. Modulates alternative splicing by phosphorylating the splice factor SRSF6. Phosphorylates SEPTIN4, SEPTIN5 and SF3B1. The protein is Dual specificity tyrosine-phosphorylation-regulated kinase 1A of Xenopus tropicalis (Western clawed frog).